The sequence spans 547 residues: Phosphomethylpyrimidine synthase (547 aa).

Substrate-binding positions include Asn150, Met179, Tyr208, His244, 264-266, 305-308, and Glu344; these read SRG and DGLR. His348 is a binding site for Zn(2+). Tyr371 lines the substrate pocket. His412 is a Zn(2+) binding site. [4Fe-4S] cluster contacts are provided by Cys492, Cys495, and Cys500.

It belongs to the ThiC family. It depends on [4Fe-4S] cluster as a cofactor.

It carries out the reaction 5-amino-1-(5-phospho-beta-D-ribosyl)imidazole + S-adenosyl-L-methionine = 4-amino-2-methyl-5-(phosphooxymethyl)pyrimidine + CO + 5'-deoxyadenosine + formate + L-methionine + 3 H(+). It functions in the pathway cofactor biosynthesis; thiamine diphosphate biosynthesis. In terms of biological role, catalyzes the synthesis of the hydroxymethylpyrimidine phosphate (HMP-P) moiety of thiamine from aminoimidazole ribotide (AIR) in a radical S-adenosyl-L-methionine (SAM)-dependent reaction. The chain is Phosphomethylpyrimidine synthase from Nocardia farcinica (strain IFM 10152).